We begin with the raw amino-acid sequence, 605 residues long: Tungsten-containing aldehyde ferredoxin oxidoreductase (605 aa).

Tungstopterin contacts are provided by Arg-76, Asn-93, Gly-95, Arg-182, Ala-183, Gly-185, and Arg-186. Positions 288, 291, and 295 each coordinate [4Fe-4S] cluster. Asp-338, Leu-342, Asp-343, Arg-444, Lys-450, Asp-489, and Leu-493 together coordinate tungstopterin. Cys-494 lines the [4Fe-4S] cluster pocket. Leu-495 contacts tungstopterin.

This sequence belongs to the AOR/FOR family. Monomer. Homodimer. [4Fe-4S] cluster is required as a cofactor. The cofactor is tungstopterin.

The catalysed reaction is an aldehyde + 2 oxidized [2Fe-2S]-[ferredoxin] + H2O = a carboxylate + 2 reduced [2Fe-2S]-[ferredoxin] + 3 H(+). Inhibited by arsenite, iodoacetate and cyanide. Its function is as follows. Aldehyde ferredoxin oxidoreductase with a broad substrate specificity. Catalyzes the oxidation of a range of aliphatic aldehydes to their corresponding carboxylic acids. In vitro can use crotonaldehyde, acetaldehyde, formaldehyde, butyraldehyde or glyceraldehyde as substrate, using methyl viologen or ferredoxin, but not NAD(P), as the electron acceptor. Does not oxidize glucose or glyceraldehyde 3-phosphate. May be involved in a pyroglycolytic pathway. This Pyrococcus furiosus (strain ATCC 43587 / DSM 3638 / JCM 8422 / Vc1) protein is Tungsten-containing aldehyde ferredoxin oxidoreductase.